Here is a 97-residue protein sequence, read N- to C-terminus: Bacterial microcompartment shell protein EutM (97 aa).

A BMC domain is found at 3 to 87 (ALGMIETRGL…PHGDLEEVFP (85 aa)).

The protein belongs to the bacterial microcompartments protein family. In terms of assembly, homohexamer with a central pore of up to 8.6 Angstroms diameter. The hexamers pack into a two-dimensional array. Interacts with EutQ.

The protein resides in the bacterial microcompartment. It participates in amine and polyamine degradation; ethanolamine degradation. Probably a major component of the bacterial microcompartment (BMC) shell dedicated to ethanolamine degradation. Each homohexamer has a central pore with an opening of up to 8.6 Angstroms. A positively-charged funnel leads to the pore from each side of the hexamer. The pore probably allows metabolite passage into and out of the BMC. This Escherichia coli O6:H1 (strain CFT073 / ATCC 700928 / UPEC) protein is Bacterial microcompartment shell protein EutM (eutM).